We begin with the raw amino-acid sequence, 571 residues long: Proline--tRNA ligase (571 aa).

It belongs to the class-II aminoacyl-tRNA synthetase family. ProS type 1 subfamily. In terms of assembly, homodimer.

It localises to the cytoplasm. The enzyme catalyses tRNA(Pro) + L-proline + ATP = L-prolyl-tRNA(Pro) + AMP + diphosphate. In terms of biological role, catalyzes the attachment of proline to tRNA(Pro) in a two-step reaction: proline is first activated by ATP to form Pro-AMP and then transferred to the acceptor end of tRNA(Pro). As ProRS can inadvertently accommodate and process non-cognate amino acids such as alanine and cysteine, to avoid such errors it has two additional distinct editing activities against alanine. One activity is designated as 'pretransfer' editing and involves the tRNA(Pro)-independent hydrolysis of activated Ala-AMP. The other activity is designated 'posttransfer' editing and involves deacylation of mischarged Ala-tRNA(Pro). The misacylated Cys-tRNA(Pro) is not edited by ProRS. The sequence is that of Proline--tRNA ligase from Shewanella baltica (strain OS185).